The primary structure comprises 489 residues: Probable transporter MCH1 (489 aa).

Transmembrane regions (helical) follow at residues 34–54 (ISLISCLCAGSVLLFALFTPV), 68–88 (IIGSFTSIGMYLPLPVLGYLA), 94–114 (VLLSVISVLFFSPGYTLAATV), 124–144 (LAISFGLIGCATSALYFTALL), 156–175 (LTISAPVTCYGLSSLIGSRV), 196–216 (FSFLYFFLGLFDWVSASVVSI), 262–282 (ISTYVLLFSLLLSIGPSEMYI), 302–324 (VAIHAVFSTLSRLSLGALSDFLV), 335–355 (LLSIIVLGFFTQIFIATSTFV), 359–379 (YYIISALSGFSYGGLFTLYPT), 403–423 (IGSTTFGMVFGLVYDSACGVF), and 463–483 (SLIIINHLHYIKYIYLLILRI).

It belongs to the major facilitator superfamily.

It is found in the vacuole membrane. In terms of biological role, probable transporter. This Wickerhamomyces anomalus (Yeast) protein is Probable transporter MCH1 (MCH1).